A 76-amino-acid chain; its full sequence is UPF0291 protein Aflv_1503 (76 aa).

The tract at residues 56–76 is disordered; that stretch reads DPNGNDVTPQKLKDSKKKRLH.

It belongs to the UPF0291 family.

It is found in the cytoplasm. The protein is UPF0291 protein Aflv_1503 of Anoxybacillus flavithermus (strain DSM 21510 / WK1).